The primary structure comprises 106 residues: Glycoprotein GP16 (106 aa).

In terms of processing, glycosylated.

It localises to the host cytoplasm. Its function is as follows. May be involved in formation or transport of the nucleocapsid-containing vesicles around the nuclear membrane. This is Glycoprotein GP16 (GP16) from Autographa californica nuclear polyhedrosis virus (AcMNPV).